The primary structure comprises 353 residues: uncharacterized protein (353 aa).

Disordered regions lie at residues methionine 1–glutamine 24, asparagine 245–proline 280, and alanine 305–asparagine 353. Residues asparagine 9–glutamine 24 are compositionally biased toward low complexity. Residues lysine 254–proline 280 show a composition bias toward basic and acidic residues. Over residues valine 321 to valine 332 the composition is skewed to low complexity. The span at glutamate 342–asparagine 353 shows a compositional bias: acidic residues.

This is an uncharacterized protein from Acanthamoeba polyphaga mimivirus (APMV).